A 319-amino-acid chain; its full sequence is Replication factor C small subunit 2 (319 aa).

Position 44 to 51 (44 to 51) interacts with ATP; that stretch reads GPPGTGKT.

It belongs to the activator 1 small subunits family. RfcS subfamily. Heteromultimer composed of small subunits (RfcS) and large subunits (RfcL).

Functionally, part of the RFC clamp loader complex which loads the PCNA sliding clamp onto DNA. The protein is Replication factor C small subunit 2 of Pyrobaculum aerophilum (strain ATCC 51768 / DSM 7523 / JCM 9630 / CIP 104966 / NBRC 100827 / IM2).